A 303-amino-acid polypeptide reads, in one-letter code: Di/tripeptide transport system permease protein DppC (303 aa).

The next 7 membrane-spanning stretches (helical) occupy residues 33–53, 103–123, 131–151, 152–172, 202–222, 225–245, and 267–287; these read ALGGLLFMLLIVFCALFAPWV, LLIGLSSVVISLIPGILLGLL, AGPLIMRLMDIMLALPSLLLA, VAIVAILGPGLINTVIAIAIV, AGTLRLMFVCVLPNCMAPLIV, TLSFSSAILDAAALGFLGLGV, and WWVVSLPGLTILLSVLAINLM. The region spanning 99–288 is the ABC transmembrane type-1 domain; the sequence is ARLSLLIGLS…LSVLAINLMG (190 aa).

It belongs to the binding-protein-dependent transport system permease family. OppBC subfamily. As to quaternary structure, the complex is composed of two ATP-binding proteins (DppD and DppF), two transmembrane proteins (DppB and DppC) and a solute-binding protein (DppA1-A5). Five orthologous SBPs (DppA1-A5) are present in P.aeruginosa, which increases the substrate specificity of the DppBCDF transporter.

The protein localises to the cell inner membrane. In terms of biological role, part of the ABC transporter DppABCDF involved in the uptake of various di/tripeptides. Is also involved in the uptake of phaseolotoxin, a toxic tripeptide inhibiting the enzyme ornithine carbamoyltransferase. Responsible for the translocation of the substrate across the membrane. The chain is Di/tripeptide transport system permease protein DppC from Pseudomonas aeruginosa (strain UCBPP-PA14).